Consider the following 98-residue polypeptide: Flagellar hook-basal body complex protein FliE (98 aa).

The protein belongs to the FliE family.

It localises to the bacterial flagellum basal body. The chain is Flagellar hook-basal body complex protein FliE from Listeria monocytogenes serovar 1/2a (strain ATCC BAA-679 / EGD-e).